The primary structure comprises 240 residues: Thiamine-phosphate synthase (240 aa).

Residues 63–67 and N94 each bind 4-amino-2-methyl-5-(diphosphooxymethyl)pyrimidine; that span reads QYREK. Residues D95 and D114 each coordinate Mg(2+). Residue T133 coordinates 4-amino-2-methyl-5-(diphosphooxymethyl)pyrimidine. 159–161 serves as a coordination point for 2-[(2R,5Z)-2-carboxy-4-methylthiazol-5(2H)-ylidene]ethyl phosphate; sequence TFT. K162 contacts 4-amino-2-methyl-5-(diphosphooxymethyl)pyrimidine. 2-[(2R,5Z)-2-carboxy-4-methylthiazol-5(2H)-ylidene]ethyl phosphate-binding positions include G190 and 210–211; that span reads IS.

The protein belongs to the thiamine-phosphate synthase family. Mg(2+) is required as a cofactor.

The enzyme catalyses 2-[(2R,5Z)-2-carboxy-4-methylthiazol-5(2H)-ylidene]ethyl phosphate + 4-amino-2-methyl-5-(diphosphooxymethyl)pyrimidine + 2 H(+) = thiamine phosphate + CO2 + diphosphate. It catalyses the reaction 2-(2-carboxy-4-methylthiazol-5-yl)ethyl phosphate + 4-amino-2-methyl-5-(diphosphooxymethyl)pyrimidine + 2 H(+) = thiamine phosphate + CO2 + diphosphate. It carries out the reaction 4-methyl-5-(2-phosphooxyethyl)-thiazole + 4-amino-2-methyl-5-(diphosphooxymethyl)pyrimidine + H(+) = thiamine phosphate + diphosphate. It functions in the pathway cofactor biosynthesis; thiamine diphosphate biosynthesis; thiamine phosphate from 4-amino-2-methyl-5-diphosphomethylpyrimidine and 4-methyl-5-(2-phosphoethyl)-thiazole: step 1/1. Its function is as follows. Condenses 4-methyl-5-(beta-hydroxyethyl)thiazole monophosphate (THZ-P) and 2-methyl-4-amino-5-hydroxymethyl pyrimidine pyrophosphate (HMP-PP) to form thiamine monophosphate (TMP). The protein is Thiamine-phosphate synthase of Methanosarcina mazei (strain ATCC BAA-159 / DSM 3647 / Goe1 / Go1 / JCM 11833 / OCM 88) (Methanosarcina frisia).